The chain runs to 360 residues: Photosystem II protein D1 1 (360 aa).

Transmembrane regions (helical) follow at residues 29–46 (YVGW…TAAI), 118–133 (HFLI…QWEL), and 142–156 (WIPV…AATA). Position 118 (H118) interacts with chlorophyll a. Position 126 (Y126) interacts with pheophytin a. D170 and E189 together coordinate [CaMn4O5] cluster. A helical membrane pass occupies residues 197 to 218 (FHMIGVAGVFGGALFSAMHGSL). H198 contributes to the chlorophyll a binding site. A quinone-binding positions include H215 and 264–265 (SF). Fe cation is bound at residue H215. Position 272 (H272) interacts with Fe cation. Residues 274–288 (FLAAWPVIGIWFAAL) traverse the membrane as a helical segment. The [CaMn4O5] cluster site is built by H332, E333, D342, and A344. A propeptide spanning residues 345–360 (SGEVQPIALAAPAIAS) is cleaved from the precursor.

The protein belongs to the reaction center PufL/M/PsbA/D family. PSII is composed of 1 copy each of membrane proteins PsbA, PsbB, PsbC, PsbD, PsbE, PsbF, PsbH, PsbI, PsbJ, PsbK, PsbL, PsbM, PsbT, PsbX, PsbY, PsbZ, Psb30/Ycf12, peripheral proteins PsbO, CyanoQ (PsbQ), PsbU, PsbV and a large number of cofactors. It forms dimeric complexes. The D1/D2 heterodimer binds P680, chlorophylls that are the primary electron donor of PSII, and subsequent electron acceptors. It shares a non-heme iron and each subunit binds pheophytin, quinone, additional chlorophylls, carotenoids and lipids. D1 provides most of the ligands for the Mn4-Ca-O5 cluster of the oxygen-evolving complex (OEC). There is also a Cl(-1) ion associated with D1 and D2, which is required for oxygen evolution. The PSII complex binds additional chlorophylls, carotenoids and specific lipids. serves as cofactor. In terms of processing, tyr-161 forms a radical intermediate that is referred to as redox-active TyrZ, YZ or Y-Z. C-terminally processed by CtpA; processing is essential to allow assembly of the oxygen-evolving complex and thus photosynthetic growth.

It localises to the cellular thylakoid membrane. The catalysed reaction is 2 a plastoquinone + 4 hnu + 2 H2O = 2 a plastoquinol + O2. In terms of biological role, photosystem II (PSII) is a light-driven water:plastoquinone oxidoreductase that uses light energy to abstract electrons from H(2)O, generating O(2) and a proton gradient subsequently used for ATP formation. It consists of a core antenna complex that captures photons, and an electron transfer chain that converts photonic excitation into a charge separation. The D1/D2 (PsbA/PsbD) reaction center heterodimer binds P680, the primary electron donor of PSII as well as several subsequent electron acceptors. The sequence is that of Photosystem II protein D1 1 from Trichormus variabilis (strain ATCC 29413 / PCC 7937) (Anabaena variabilis).